We begin with the raw amino-acid sequence, 66 residues long: Large ribosomal subunit protein bL31 (66 aa).

4 residues coordinate Zn(2+): Cys16, Cys18, Cys36, and Cys39.

This sequence belongs to the bacterial ribosomal protein bL31 family. Type A subfamily. In terms of assembly, part of the 50S ribosomal subunit. It depends on Zn(2+) as a cofactor.

Its function is as follows. Binds the 23S rRNA. In Anoxybacillus flavithermus (strain DSM 21510 / WK1), this protein is Large ribosomal subunit protein bL31.